A 1343-amino-acid chain; its full sequence is DNA-directed RNA polymerase subunit beta (1343 aa).

Belongs to the RNA polymerase beta chain family. In terms of assembly, the RNAP catalytic core consists of 2 alpha, 1 beta, 1 beta' and 1 omega subunit. When a sigma factor is associated with the core the holoenzyme is formed, which can initiate transcription.

It carries out the reaction RNA(n) + a ribonucleoside 5'-triphosphate = RNA(n+1) + diphosphate. In terms of biological role, DNA-dependent RNA polymerase catalyzes the transcription of DNA into RNA using the four ribonucleoside triphosphates as substrates. This Shewanella sediminis (strain HAW-EB3) protein is DNA-directed RNA polymerase subunit beta.